The chain runs to 533 residues: MHSLNTRRGLGLAAAMTLAAGALVAPTGAAAPADPNGSTIDPDAATTLTVHKCEQTDTNGVKEGTGNEDPQAECKPVSDVEFTITKLNVDLTTYDGWKTLADLKGDVVKAGALKSTTVQKITTGANGLASFTDAQTEVGAYLVSETRTPDKVIPAEDFVVTLPMTNPQDTAKWNYNVHVYPKNTLSGVDKQVTDKPAPGSGRDITYTITTSIPKVDYPGGARIKRYEVVDRLDKRIKKEALTPVVKIVGQNEVTLAETTDYTLITAEGKDHNWATIQLTEEGRRKASEARYNGNGETKLQVTLNAKFDAAVNLEGDLSNTAGLIPNDSPNFTWDPNNPGTTTDIPGIPTTPVLSKYGKVVLTKTGTDDLADKTKYNGAQFQVYECTKTASGATLRDSDPSTQTVDPLTIGGEKTFTTAGQGTVEINYLRANDYVNGAKKDQLTDEDYYCLVETKAPEGYNLQADPLPFRVLAEKAEKKAATEVTVTDIPKNAGFRLPLTGANGVIFLTIAGALLVAGGAVVAYANKRRHVAKH.

The N-terminal stretch at 1 to 30 is a signal peptide; the sequence is MHSLNTRRGLGLAAAMTLAAGALVAPTGAA. The LPXTG sorting signal motif lies at 496–500; it reads LPLTG. Pentaglycyl murein peptidoglycan amidated threonine is present on Thr499. A propeptide spans 500-533 (removed by sortase); it reads GANGVIFLTIAGALLVAGGAVVAYANKRRHVAKH.

It is found in the secreted. It localises to the cell wall. The protein resides in the fimbrium. Major fimbrial subunit of A.viscosus. This Actinomyces viscosus protein is Fimbrial subunit type 1.